A 456-amino-acid chain; its full sequence is Esterase MT1326 (456 aa).

3 LysM domains span residues 3 to 50, 54 to 101, and 105 to 152; these read STHA…RLIM, TRYT…RLIM, and TRYT…VLVI. Catalysis depends on residues Ser-294, Asp-391, and His-425.

Belongs to the AB hydrolase superfamily.

The protein resides in the secreted. The protein localises to the cell wall. It carries out the reaction a fatty acid ester + H2O = an aliphatic alcohol + a fatty acid + H(+). Its function is as follows. Exhibits lipolytic activity with medium chain length esters as optimum substrates. This Mycobacterium tuberculosis (strain CDC 1551 / Oshkosh) protein is Esterase MT1326.